Here is a 338-residue protein sequence, read N- to C-terminus: MELQAQLKQYKPLNQQQMNEFIELLIADDISNEIKANLLSSFSEKEITQEELTYISKSLIHSMYRQQPYYPNSMCVCGTGGDKSNSFNISTTVSFVIASANIPVIKHGNKSVTSSSGSTDLLEAMGINTSSVEATPSQLNQVGLAFLSATDTYPIMKSIQPIRKMMTNPTIFNITGPIINPFKLDYQVMGVYETSKLEKIAQTLKDLGRKKAIVVYGANGMDEATLSGDNMIYEVNENEATKNYTVNPKDVGLAYAPNEALIGGTPLENLEITKNILTGVDRSAKRDVVVFNAGIALYVAEKVSSIKQGVIEAQRLIDNGNAIAQYNKMGGMTYDYIG.

5-phospho-alpha-D-ribose 1-diphosphate-binding positions include G78, G81–D82, S86, N88–T91, K106–S114, and S118. G78 contacts anthranilate. S90 contacts Mg(2+). N109 contributes to the anthranilate binding site. R163 is a binding site for anthranilate. 2 residues coordinate Mg(2+): D222 and E223.

The protein belongs to the anthranilate phosphoribosyltransferase family. Homodimer. The cofactor is Mg(2+).

It carries out the reaction N-(5-phospho-beta-D-ribosyl)anthranilate + diphosphate = 5-phospho-alpha-D-ribose 1-diphosphate + anthranilate. It participates in amino-acid biosynthesis; L-tryptophan biosynthesis; L-tryptophan from chorismate: step 2/5. Functionally, catalyzes the transfer of the phosphoribosyl group of 5-phosphorylribose-1-pyrophosphate (PRPP) to anthranilate to yield N-(5'-phosphoribosyl)-anthranilate (PRA). This is Anthranilate phosphoribosyltransferase from Staphylococcus saprophyticus subsp. saprophyticus (strain ATCC 15305 / DSM 20229 / NCIMB 8711 / NCTC 7292 / S-41).